The chain runs to 87 residues: Small ribosomal subunit protein bS20 (87 aa).

The protein belongs to the bacterial ribosomal protein bS20 family.

In terms of biological role, binds directly to 16S ribosomal RNA. This is Small ribosomal subunit protein bS20 from Corynebacterium diphtheriae (strain ATCC 700971 / NCTC 13129 / Biotype gravis).